Here is a 404-residue protein sequence, read N- to C-terminus: Corticosteroid-binding globulin (404 aa).

Positions 1–22 are cleaved as a signal peptide; it reads MLPTLYTCLLWLSTSGLWTVQA. Asparagine 95, asparagine 119, and asparagine 175 each carry an N-linked (GlcNAc...) asparagine glycan. Residue glutamine 253 coordinates cortisol. N-linked (GlcNAc...) asparagine glycosylation occurs at asparagine 259. Glutamine 285 contacts cortisol. Asparagine 326 carries an N-linked (GlcNAc...) asparagine glycan. Tryptophan 392 contributes to the cortisol binding site.

It belongs to the serpin family. In terms of processing, glycosylation in position Asn-259 is needed for steroid binding.

It localises to the secreted. Functionally, major transport protein for glucocorticoids and progestins in the blood of almost all vertebrate species. The chain is Corticosteroid-binding globulin (SERPINA6) from Bos taurus (Bovine).